The primary structure comprises 241 residues: Small ribosomal subunit protein uS2 (241 aa).

It belongs to the universal ribosomal protein uS2 family.

This is Small ribosomal subunit protein uS2 from Escherichia coli (strain 55989 / EAEC).